Reading from the N-terminus, the 205-residue chain is Ribosomal RNA small subunit methyltransferase G (205 aa).

Residues Gly71, Phe76, 120 to 121 (IE), and Arg134 each bind S-adenosyl-L-methionine.

Belongs to the methyltransferase superfamily. RNA methyltransferase RsmG family.

Its subcellular location is the cytoplasm. The enzyme catalyses guanosine(527) in 16S rRNA + S-adenosyl-L-methionine = N(7)-methylguanosine(527) in 16S rRNA + S-adenosyl-L-homocysteine. In terms of biological role, specifically methylates the N7 position of guanine in position 527 of 16S rRNA. The protein is Ribosomal RNA small subunit methyltransferase G of Paramagnetospirillum magneticum (strain ATCC 700264 / AMB-1) (Magnetospirillum magneticum).